A 186-amino-acid polypeptide reads, in one-letter code: Cell division protein ZapC (186 aa).

Belongs to the ZapC family. As to quaternary structure, interacts directly with FtsZ.

It localises to the cytoplasm. Contributes to the efficiency of the cell division process by stabilizing the polymeric form of the cell division protein FtsZ. Acts by promoting interactions between FtsZ protofilaments and suppressing the GTPase activity of FtsZ. This is Cell division protein ZapC from Musicola paradisiaca (strain Ech703) (Dickeya paradisiaca).